Here is a 343-residue protein sequence, read N- to C-terminus: Probable dual-specificity RNA methyltransferase RlmN (343 aa).

The active-site Proton acceptor is Glu94. Residues 100-330 (YDSRVTVCVS…ATVRMSMGSD (231 aa)) enclose the Radical SAM core domain. Cys107 and Cys335 are disulfide-bonded. [4Fe-4S] cluster contacts are provided by Cys114, Cys118, and Cys121. S-adenosyl-L-methionine-binding positions include 161-162 (GE), Ser193, 216-218 (SLH), and Asn292. The S-methylcysteine intermediate role is filled by Cys335.

It belongs to the radical SAM superfamily. RlmN family. [4Fe-4S] cluster is required as a cofactor.

The protein localises to the cytoplasm. It carries out the reaction adenosine(2503) in 23S rRNA + 2 reduced [2Fe-2S]-[ferredoxin] + 2 S-adenosyl-L-methionine = 2-methyladenosine(2503) in 23S rRNA + 5'-deoxyadenosine + L-methionine + 2 oxidized [2Fe-2S]-[ferredoxin] + S-adenosyl-L-homocysteine. The catalysed reaction is adenosine(37) in tRNA + 2 reduced [2Fe-2S]-[ferredoxin] + 2 S-adenosyl-L-methionine = 2-methyladenosine(37) in tRNA + 5'-deoxyadenosine + L-methionine + 2 oxidized [2Fe-2S]-[ferredoxin] + S-adenosyl-L-homocysteine. Specifically methylates position 2 of adenine 2503 in 23S rRNA and position 2 of adenine 37 in tRNAs. This Clostridioides difficile (strain 630) (Peptoclostridium difficile) protein is Probable dual-specificity RNA methyltransferase RlmN.